Here is a 594-residue protein sequence, read N- to C-terminus: Probable Xaa-Pro aminopeptidase P (594 aa).

4 residues coordinate Mn(2+): Asp-391, Asp-402, Glu-500, and Glu-514.

This sequence belongs to the peptidase M24B family. Requires Mn(2+) as cofactor.

The enzyme catalyses Release of any N-terminal amino acid, including proline, that is linked to proline, even from a dipeptide or tripeptide.. In terms of biological role, catalyzes the removal of a penultimate prolyl residue from the N-termini of peptides. This chain is Probable Xaa-Pro aminopeptidase P (ampp), found in Pyrenophora tritici-repentis (strain Pt-1C-BFP) (Wheat tan spot fungus).